A 205-amino-acid chain; its full sequence is Large ribosomal subunit protein uL4 (205 aa).

A disordered region spans residues 44 to 79 (RAGTKAQKTRREVSGSGAKPWRQKGTGRARAGSSRS).

This sequence belongs to the universal ribosomal protein uL4 family. Part of the 50S ribosomal subunit.

Functionally, one of the primary rRNA binding proteins, this protein initially binds near the 5'-end of the 23S rRNA. It is important during the early stages of 50S assembly. It makes multiple contacts with different domains of the 23S rRNA in the assembled 50S subunit and ribosome. In terms of biological role, forms part of the polypeptide exit tunnel. The protein is Large ribosomal subunit protein uL4 of Coxiella burnetii (strain Dugway 5J108-111).